Reading from the N-terminus, the 303-residue chain is MTPQDLKDVMSSGLLSFPVTDFDSNGNFNAKGYAARLEWLAPYGASALFAAGGTGEYFSLYGEEYGQIIKTAVDTCRGKVPIIAGAGGPTRTAIAHAQEAERLGAHGVLLLPHYLTEAGQEGLIAHVEQVCKSVKFGVIVYNRDRTRFTPESLAILAERCPNLVGFKDGMGNIETMSAIFMKMGDRFAYLGGLPTAEVYAAAYKALGTPVYSSAVFNFIPKTAMAFYEAVRTDDMATQHKLLKEFFMPYLKIRNRVEGYGVSIIKAGAKLVGHDAGPVRAPLTDLKPSELEELKALIDKLGPQ.

Belongs to the DapA family.

The enzyme catalyses 5-dehydro-4-deoxy-D-glucarate + H(+) = 2,5-dioxopentanoate + CO2 + H2O. It participates in carbohydrate acid metabolism; D-glucarate degradation; 2,5-dioxopentanoate from D-glucarate: step 2/2. The polypeptide is Probable 5-dehydro-4-deoxyglucarate dehydratase (Delftia acidovorans (strain DSM 14801 / SPH-1)).